The primary structure comprises 85 residues: Large ribosomal subunit protein bL27 (85 aa).

Residues 1–10 (MAQKKGGGST) show a composition bias toward gly residues. Positions 1–20 (MAQKKGGGSTRNGRDSKPKM) are disordered.

It belongs to the bacterial ribosomal protein bL27 family.

This chain is Large ribosomal subunit protein bL27, found in Acidovorax ebreus (strain TPSY) (Diaphorobacter sp. (strain TPSY)).